We begin with the raw amino-acid sequence, 218 residues long: Capsid protein (218 aa).

N-acetylmethionine; by host is present on M1. Residues 1–10 (MDKSESTSAG) are compositionally biased toward low complexity. The interval 1–30 (MDKSESTSAGRNRRRRLRRGSRSAPSSSDA) is disordered. The segment covering 11–21 (RNRRRRLRRGS) has biased composition (basic residues).

Belongs to the cucumovirus capsid protein family.

The protein localises to the virion. Its function is as follows. Capsid protein. Probably binds RNA and plays a role in packaging. The chain is Capsid protein from Cucumber mosaic virus (strain Kor) (CMV).